A 1439-amino-acid chain; its full sequence is Myomesin-3 (1439 aa).

A disordered region spans residues 1–57 (MTLPHSPGSAGEPQASQTVQVHRLEHRQEEEQKEERQHSLQMGSSVQRRTYRSSEEE). Residues 22–38 (HRLEHRQEEEQKEERQH) show a composition bias toward basic and acidic residues. Over residues 39–48 (SLQMGSSVQR) the composition is skewed to polar residues. Residues 119-149 (QRLLRQRRDWKALRQRTEEKVREAKELIELC) are a coiled coil. Ig-like C2-type domains lie at 154–246 (PWFW…AKVL) and 269–362 (PSAE…AYVF). Fibronectin type-III domains follow at residues 376–471 (SPLN…TGDY), 504–599 (APTN…LKGK), 605–698 (PPAQ…VKQA), 704–799 (APYD…CKEW), and 806–901 (PPYD…LEDK). Ig-like C2-type domains are found at residues 1122 to 1207 (PYFQ…LDLT) and 1336 to 1425 (AKVV…VTIS).

As to quaternary structure, homodimer. In terms of tissue distribution, mainly expressed in slow muscle, extraocular muscle and embryonic/neonatal skeletal muscle (at protein level). Expression in skeletal muscle is fiber type specific, with the highest levels in type IIA fibers (intermediate speed) and lower levels in type I fibers.

Its subcellular location is the cytoplasm. It localises to the myofibril. The protein localises to the sarcomere. It is found in the m line. May link the intermediate filament cytoskeleton to the M-disk of the myofibrils in striated muscle. The chain is Myomesin-3 (Myom3) from Mus musculus (Mouse).